Reading from the N-terminus, the 963-residue chain is Transcription factor cbf12 (963 aa).

2 disordered regions span residues 130–207 (NPSN…SQGL) and 248–289 (VNMN…PPQK). Composition is skewed to polar residues over residues 143–207 (FENN…SQGL) and 249–289 (NMNS…PPQK).

This sequence belongs to the Su(H) family.

The protein localises to the nucleus. In terms of biological role, transcription factor which function may be to trigger the increase of adhesion at stationary phase, possibly by counteracting or replacing cbf11 at the respective promoters. May also play a cbf11-antagonistic role in the regulation of a number of other important processes such as extracellular material production, colony morphogenesis, ploidy maintenance, or meiosis. This is Transcription factor cbf12 (cbf12) from Schizosaccharomyces pombe (strain 972 / ATCC 24843) (Fission yeast).